The chain runs to 1338 residues: Fanconi anemia group I protein (1338 aa).

Lys-525 is covalently cross-linked (Glycyl lysine isopeptide (Lys-Gly) (interchain with G-Cter in ubiquitin)). Phosphoserine is present on residues Ser-558 and Ser-561. Thr-567 carries the phosphothreonine modification.

Belongs to the Fanconi anemia group I protein family. Homodimer. Part of a FANCI-FANCD2 heterodimeric complex that binds and scans dsDNA for DNA damage. Interacts with FANCL. Interacts with MTMR15/FAN1. Interacts with POLN. Interacts with UBL5; the interaction promotes FANCI homodimerization. Post-translationally, monoubiquitinated by FANCL during S phase and upon genotoxic stress. Deubiquitinated by USP1 as cells enter G2/M, or once DNA repair is completed. Monoubiquitination requires the FANCA-FANCB-FANCC-FANCE-FANCF-FANCG-FANCM complex. Ubiquitination is required for binding to chromatin, DNA repair, and normal cell cycle progression. Monoubiquitination is stimulated by DNA-binding. Phosphorylated in response to DNA damage by ATM and/or ATR. Phosphorylation of FANCI promotes ubiquitination of FANCD2, which prevents DNA release from the FANCI-FANCD2 complex.

Plays an essential role in the repair of DNA double-strand breaks by homologous recombination and in the repair of interstrand DNA cross-links (ICLs) by promoting FANCD2 monoubiquitination by FANCL and participating in recruitment to DNA repair sites. The FANCI-FANCD2 complex binds and scans double-stranded DNA (dsDNA) for DNA damage; this complex stalls at DNA junctions between double-stranded DNA and single-stranded DNA. Participates in S phase and G2 phase checkpoint activation upon DNA damage. The sequence is that of Fanconi anemia group I protein from Gallus gallus (Chicken).